Reading from the N-terminus, the 461-residue chain is Tubulin gamma chain (461 aa).

142-148 lines the GTP pocket; sequence AGGTGSG.

The protein belongs to the tubulin family.

It is found in the cytoplasm. The protein localises to the cytoskeleton. It localises to the microtubule organizing center. Its subcellular location is the spindle pole body. Functionally, tubulin is the major constituent of microtubules. The gamma chain is found at microtubule organizing centers (MTOC) such as the spindle poles or the centrosome, suggesting that it is involved in the minus-end nucleation of microtubule assembly. In Neurospora crassa (strain ATCC 24698 / 74-OR23-1A / CBS 708.71 / DSM 1257 / FGSC 987), this protein is Tubulin gamma chain (tbg).